The primary structure comprises 473 residues: Photosystem II CP43 reaction center protein (473 aa).

Residues 1-14 (MKTLYSLRRFYPVE) constitute a propeptide that is removed on maturation. T15 bears the N-acetylthreonine mark. T15 is subject to Phosphothreonine. 5 consecutive transmembrane segments (helical) span residues 69–93 (LFEV…PHLA), 134–155 (LLGP…KDRN), 178–200 (KALY…RKIT), 255–275 (KPFA…LSYS), and 291–312 (WFNN…ASQA). E367 contributes to the [CaMn4O5] cluster binding site. The chain crosses the membrane as a helical span at residues 447-471 (RARAAAAGFEKGIDRDFEPVLSMTP).

It belongs to the PsbB/PsbC family. PsbC subfamily. As to quaternary structure, PSII is composed of 1 copy each of membrane proteins PsbA, PsbB, PsbC, PsbD, PsbE, PsbF, PsbH, PsbI, PsbJ, PsbK, PsbL, PsbM, PsbT, PsbX, PsbY, PsbZ, Psb30/Ycf12, at least 3 peripheral proteins of the oxygen-evolving complex and a large number of cofactors. It forms dimeric complexes. Binds multiple chlorophylls and provides some of the ligands for the Ca-4Mn-5O cluster of the oxygen-evolving complex. It may also provide a ligand for a Cl- that is required for oxygen evolution. PSII binds additional chlorophylls, carotenoids and specific lipids. serves as cofactor.

It is found in the plastid. The protein localises to the chloroplast thylakoid membrane. Functionally, one of the components of the core complex of photosystem II (PSII). It binds chlorophyll and helps catalyze the primary light-induced photochemical processes of PSII. PSII is a light-driven water:plastoquinone oxidoreductase, using light energy to abstract electrons from H(2)O, generating O(2) and a proton gradient subsequently used for ATP formation. This is Photosystem II CP43 reaction center protein from Helianthus annuus (Common sunflower).